The primary structure comprises 96 residues: Beta-defensin 132 (96 aa).

The N-terminal stretch at 1–22 (MKFLLLVLAALRFLTQVIPASG) is a signal peptide. Intrachain disulfides connect Cys27/Cys55, Cys35/Cys49, and Cys39/Cys56. Residues 74–96 (HWQSRRRNTQRKDKKQQTTVTSS) are disordered. Over residues 76 to 87 (QSRRRNTQRKDK) the composition is skewed to basic residues.

The protein belongs to the beta-defensin family.

The protein resides in the secreted. Its function is as follows. Has antibacterial activity. The sequence is that of Beta-defensin 132 (DEFB132) from Hylobates lar (Lar gibbon).